We begin with the raw amino-acid sequence, 637 residues long: Transcription termination factor FttA (637 aa).

The tract at residues 4–71 (EDVLLDLKHK…IAMRPDPRVL (68 aa)) is KHa. The KHb stretch occupies residues 72–139 (ATPEDSISII…WIPKVVRTPP (68 aa)). Residues 180–383 (WVRVTALGGC…VISEATYGNA (204 aa)) are metallo-beta-lactamase N-terminus. Zn(2+) contacts are provided by histidine 242, histidine 244, aspartate 246, histidine 247, histidine 329, and aspartate 352. The tract at residues 384 to 578 (NAFQPALKDA…MEVQVVDGFS (195 aa)) is beta-Casp. A metallo-beta-lactamase C-terminus region spans residues 579 to 637 (GHSDRRQLMEYVKRMQPRPERVFTEHGDEKACVDLASSVYKKLKIETRALTNLETVRLL). Histidine 604 provides a ligand contact to Zn(2+).

It belongs to the metallo-beta-lactamase superfamily. RNA-metabolizing metallo-beta-lactamase-like family. FttA subfamily. As to quaternary structure, homodimer. Interacts with RNA polymerase (RNAP), interacts with the Spt4-Spt5 complex. Zn(2+) serves as cofactor.

Terminates transcription on the whole genome. Termination is linked to FttA-mediated RNA cleavage and does not require NTP hydrolysis. Cleaves endonucleolytically at the RNA exit channel of RNA polymerase (RNAP); the 5'-3' exonuclease activity of this protein degrades the nascent RNA released from RNAP. In Methanosarcina mazei (strain ATCC BAA-159 / DSM 3647 / Goe1 / Go1 / JCM 11833 / OCM 88) (Methanosarcina frisia), this protein is Transcription termination factor FttA.